We begin with the raw amino-acid sequence, 1289 residues long: SH3 domain and tetratricopeptide repeat-containing protein 2 (1289 aa).

SH3 domains follow at residues 176-239 and 267-330; these read EGHF…PLPV and IGRG…LDSC. Positions 393–442 are disordered; it reads SQPEGFREARSGGTWMERQTIGSRRSSGSGDSSPEEDELISASSDSYHLP. Residues 414-424 show a composition bias toward low complexity; it reads GSRRSSGSGDS. TPR repeat units follow at residues 529–562, 758–791, 837–870, 1002–1038, 1085–1119, 1120–1153, 1167–1200, and 1211–1245; these read ARLCFLLGRLSIRKTKLSQARVYFEEAIRVLDGA, RTLCLILSKMYLQHQSPDGSVHYLSQAHVLGKLL, GVVHNLLGLAFEDEGRTSRAAKSYLRALIRAREM, GQLLESLGQLYRNLNTSRSLRRSLACIKESLRIFVDL, LKLYEEAGDVFFNGTRHRHRAVEYYRAGAVPLARR, MKALRTELRIFNKLTELQISLEGYEKALEFATLA, LVAFHRLATVYFSLNMYEMAEDCYLKTLSLCPPW, and AKVYCRLGRLTFYQLKDAHDATEYFLLALAAAVLM.

The chain is SH3 domain and tetratricopeptide repeat-containing protein 2 (Sh3tc2) from Mus musculus (Mouse).